A 289-amino-acid chain; its full sequence is RNA-binding protein CP29B, chloroplastic (289 aa).

The transit peptide at 1–62 (MAASASSLAL…NSPASRFARN (62 aa)) directs the protein to the chloroplast. Ser6 and Ser12 each carry phosphoserine. Val63 carries the N-acetylvaline modification. An RRM 1 domain is found at 91–169 (LKLFVGNLPF…RPLRVNAGPP (79 aa)). Residues 158–199 (DGRPLRVNAGPPPPKREDGFSRGPRSSFGSSGSGYGGGGGSG) are disordered. Positions 170-203 (PPKREDGFSRGPRSSFGSSGSGYGGGGGSGAGSG) are linker (Gly-rich). Positions 178–187 (SRGPRSSFGS) are enriched in low complexity. Residues 188–199 (SGSGYGGGGGSG) show a composition bias toward gly residues. In terms of domain architecture, RRM 2 spans 204–282 (NRVYVGNLSW…RQIRVSEAEA (79 aa)).

Post-translationally, ADP-ribosylated by the Pseudomonas syringae type III effector HopU1. ADP-ribosylation reduces the ability of the protein to bind RNA. In terms of processing, phosphorylated on tyrosine residues after treatment with abscisic acid (ABA). Phosphorylation may reduce the ability of the protein to bind RNA.

It is found in the plastid. The protein localises to the chloroplast. Its function is as follows. Could be involved in splicing and/or processing of chloroplast RNA's. This is RNA-binding protein CP29B, chloroplastic from Arabidopsis thaliana (Mouse-ear cress).